Consider the following 296-residue polypeptide: Ribosomal protein L11 methyltransferase (296 aa).

S-adenosyl-L-methionine contacts are provided by Thr139, Gly163, Asp185, and Asn232.

The protein belongs to the methyltransferase superfamily. PrmA family.

The protein localises to the cytoplasm. The enzyme catalyses L-lysyl-[protein] + 3 S-adenosyl-L-methionine = N(6),N(6),N(6)-trimethyl-L-lysyl-[protein] + 3 S-adenosyl-L-homocysteine + 3 H(+). Methylates ribosomal protein L11. In Picosynechococcus sp. (strain ATCC 27264 / PCC 7002 / PR-6) (Agmenellum quadruplicatum), this protein is Ribosomal protein L11 methyltransferase.